A 1024-amino-acid polypeptide reads, in one-letter code: Multidrug resistance protein MdtC (1024 aa).

12 consecutive transmembrane segments (helical) span residues 12–32 (VATT…FSLL), 333–353 (EVER…FIFL), 360–380 (LIPA…MYLC), 387–407 (LSLM…IVVL), 435–455 (VLSM…MAGL), 469–489 (VAIG…CAWL), 528–548 (WVMV…ISIP), 853–873 (LWLI…LYES), 875–895 (VHPL…LLAL), 897–917 (LFDA…IGIV), 953–973 (PIIM…LSSG), and 984–1004 (ITIV…TPVI).

It belongs to the resistance-nodulation-cell division (RND) (TC 2.A.6) family. MdtC subfamily. Part of a tripartite efflux system composed of MdtA, MdtB and MdtC. MdtC forms a heteromultimer with MdtB.

Its subcellular location is the cell inner membrane. The protein is Multidrug resistance protein MdtC of Yersinia pseudotuberculosis serotype O:1b (strain IP 31758).